Here is a 440-residue protein sequence, read N- to C-terminus: Thymidine phosphorylase (440 aa).

This sequence belongs to the thymidine/pyrimidine-nucleoside phosphorylase family. Homodimer.

The catalysed reaction is thymidine + phosphate = 2-deoxy-alpha-D-ribose 1-phosphate + thymine. Its pathway is pyrimidine metabolism; dTMP biosynthesis via salvage pathway; dTMP from thymine: step 1/2. Its function is as follows. The enzymes which catalyze the reversible phosphorolysis of pyrimidine nucleosides are involved in the degradation of these compounds and in their utilization as carbon and energy sources, or in the rescue of pyrimidine bases for nucleotide synthesis. In Proteus mirabilis (strain HI4320), this protein is Thymidine phosphorylase.